The sequence spans 119 residues: Large ribosomal subunit protein bL20 (119 aa).

It belongs to the bacterial ribosomal protein bL20 family.

In terms of biological role, binds directly to 23S ribosomal RNA and is necessary for the in vitro assembly process of the 50S ribosomal subunit. It is not involved in the protein synthesizing functions of that subunit. This is Large ribosomal subunit protein bL20 from Shewanella halifaxensis (strain HAW-EB4).